The following is a 239-amino-acid chain: Tumor protein p53-inducible nuclear protein 1 (239 aa).

The LIR motif lies at 25–37; that stretch reads EKEDDEWILVDFI.

As to quaternary structure, interacts with p53/TP53 and HIPK2. Interacts with PRKCG, GABARAP, GABARAPL1, GABARAPL2, MAP1LC3A, MAP1LC3B and MAP1LC3C. In terms of tissue distribution, ubiquitously expressed with highest levels in the thymus.

Its subcellular location is the cytoplasm. The protein localises to the cytosol. The protein resides in the nucleus. It localises to the PML body. It is found in the cytoplasmic vesicle. Its subcellular location is the autophagosome. Functionally, antiproliferative and proapoptotic protein involved in cell stress response which acts as a dual regulator of transcription and autophagy. Acts as a positive regulator of autophagy. In response to cellular stress or activation of autophagy, relocates to autophagosomes where it interacts with autophagosome-associated proteins GABARAP, GABARAPL1/L2, MAP1LC3A/B/C and regulates autophagy. Acts as an antioxidant and plays a major role in p53/TP53-driven oxidative stress response. Possesses both a p53/TP53-independent intracellular reactive oxygen species (ROS) regulatory function and a p53/TP53-dependent transcription regulatory function. Positively regulates p53/TP53 and p73/TP73 and stimulates their capacity to induce apoptosis and regulate cell cycle. In response to double-strand DNA breaks, promotes p53/TP53 phosphorylation on 'Ser-46' and subsequent apoptosis. Acts as a tumor suppressor by inducing cell death by an autophagy and caspase-dependent mechanism. Can reduce cell migration by regulating the expression of SPARC. The polypeptide is Tumor protein p53-inducible nuclear protein 1 (Trp53inp1) (Mus musculus (Mouse)).